The chain runs to 407 residues: MQPLAEATTISKIAAVIVAAGRGERAGQSIEGPKQYRRIGGEAVLARTLRAFIDCPLVDSIVVVIHPDDHVLYERALQENCDTILVVNGGATRQESTRLGLLALRDYAPQYVMIHDGVRPFVSQDLLKRIVENLAPDEGVLPALAVSDTLKQSATDGTVKTTVPRVGLFAAQTPQAFPYTPILDAHEKAFAISRSDFTDDAAIAEWQSIAVRIIEGSADNTKLTWAKDIEMADKRLRQDHVSFPDIRTGNGYDVHSFEPGDHVTLCGVKIPHEAKLNGHSDADVGLHALTDALLATRGAGDIGTHFPPSDPQWKGAASRIFIEHAANIVREAGGRIANVDVTFISEAPKIGPHRAAMTEALCDMLGIAADRVSIKATTNEKLGFVGRREGIAAIATATVIYPGEVPE.

The tract at residues 1–246 (MQPLAEATTI…RQDHVSFPDI (246 aa)) is 2-C-methyl-D-erythritol 4-phosphate cytidylyltransferase. The tract at residues 247–407 (RTGNGYDVHS…TVIYPGEVPE (161 aa)) is 2-C-methyl-D-erythritol 2,4-cyclodiphosphate synthase. The a divalent metal cation site is built by Asp-253 and His-255. Residues 253 to 255 (DVH) and 279 to 280 (HS) each bind 4-CDP-2-C-methyl-D-erythritol 2-phosphate. Residue His-287 participates in a divalent metal cation binding. Residues 301-303 (DIG), 377-380 (TTNE), Phe-384, and Arg-387 contribute to the 4-CDP-2-C-methyl-D-erythritol 2-phosphate site.

This sequence in the N-terminal section; belongs to the IspD/TarI cytidylyltransferase family. IspD subfamily. The protein in the C-terminal section; belongs to the IspF family. A divalent metal cation is required as a cofactor.

The catalysed reaction is 2-C-methyl-D-erythritol 4-phosphate + CTP + H(+) = 4-CDP-2-C-methyl-D-erythritol + diphosphate. It catalyses the reaction 4-CDP-2-C-methyl-D-erythritol 2-phosphate = 2-C-methyl-D-erythritol 2,4-cyclic diphosphate + CMP. The protein operates within isoprenoid biosynthesis; isopentenyl diphosphate biosynthesis via DXP pathway; isopentenyl diphosphate from 1-deoxy-D-xylulose 5-phosphate: step 2/6. It participates in isoprenoid biosynthesis; isopentenyl diphosphate biosynthesis via DXP pathway; isopentenyl diphosphate from 1-deoxy-D-xylulose 5-phosphate: step 4/6. Its function is as follows. Bifunctional enzyme that catalyzes the formation of 4-diphosphocytidyl-2-C-methyl-D-erythritol from CTP and 2-C-methyl-D-erythritol 4-phosphate (MEP) (IspD), and catalyzes the conversion of 4-diphosphocytidyl-2-C-methyl-D-erythritol 2-phosphate (CDP-ME2P) to 2-C-methyl-D-erythritol 2,4-cyclodiphosphate (ME-CPP) with a corresponding release of cytidine 5-monophosphate (CMP) (IspF). The sequence is that of Bifunctional enzyme IspD/IspF from Brucella anthropi (strain ATCC 49188 / DSM 6882 / CCUG 24695 / JCM 21032 / LMG 3331 / NBRC 15819 / NCTC 12168 / Alc 37) (Ochrobactrum anthropi).